The following is a 319-amino-acid chain: Alpha-hemolysin (319 aa).

Residues M1–A26 form the signal peptide.

Belongs to the aerolysin family. Self-assembles to first form a non-lytic oligomeric intermediate, and then, a mushroom-shaped homoheptamer structure of 100 Angstroms in length and up to 100 Angstroms in diameter. Interacts with human ADAM10; this interaction is required for toxin pore formation, disruption of focal adhesions, and hly-mediated cytotoxicity.

Its subcellular location is the secreted. Alpha-toxin binds to the membrane of eukaryotic cells (particularly red blood cells, RBC) forming pores, resulting in hemolysis, with the release of low-molecular weight molecules leading to eventual osmotic RBC lysis. Human RBCs bind much less alpha-toxin than do rabbit RBCs. Heptamer oligomerization and pore formation is required for lytic activity. This is Alpha-hemolysin (hly) from Staphylococcus aureus.